Here is a 338-residue protein sequence, read N- to C-terminus: Envelope glycoprotein K (338 aa).

A signal peptide spans 1-30; it reads MLAVRSLQHLTTVIFITAYGLVLAWYIVFG. Residues 31–121 lie on the Extracellular side of the membrane; sequence ASPLHRCIYA…VNCLEALWDT (91 aa). The involved in fusion stretch occupies residues 31-121; it reads ASPLHRCIYA…VNCLEALWDT (91 aa). N-linked (GlcNAc...) asparagine; by host glycosylation is found at Asn48 and Asn58. The helical transmembrane segment at 122–140 threads the bilayer; sequence QMRLVVVGWFLYLAFVALH. Topologically, residues 141–212 are cytoplasmic; that stretch reads QRRCMFGVVS…DPVTFLYHRP (72 aa). Residues 213-233 traverse the membrane as a helical segment; the sequence is AIGVIVGCELLLRFVALGLIV. Residues 234 to 243 lie on the Extracellular side of the membrane; that stretch reads GTALISRGAC. The chain crosses the membrane as a helical span at residues 244 to 264; the sequence is AITHPLFLTITTWCFVSIIAL. At 265–301 the chain is on the cytoplasmic side; the sequence is TELYFILRRGSAPKNAEPAAPRGRSKGWSGVCGRCCS. Positions 265-301 are interaction with UL20; the sequence is TELYFILRRGSAPKNAEPAAPRGRSKGWSGVCGRCCS. Residues 302-322 form a helical membrane-spanning segment; the sequence is IILSGIAVRLCYIAVVAGVVL. Residues 323–338 lie on the Extracellular side of the membrane; that stretch reads VALRYEQEIQRRLFDL.

Belongs to the alphaherpesvirinae glycoprotein K family. Interacts (via UL20 interaction region) with protein UL20 (via N-terminus); this interaction probably plays a role in the coordinate transport of protein UL20 and gK to the trans-Golgi network (TGN), and is required for the cell surface expression of gK. N-glycosylated.

The protein resides in the host cell membrane. It is found in the host endosome membrane. The protein localises to the host Golgi apparatus membrane. In terms of biological role, glycoprotein that probably modulates membrane fusion events during secondary envelopment of cytoplasmic capsids that bud into specific trans-Golgi network (TGN)-derived membranes. Also plays a role, together with gB, in virus-induced cell-to-cell fusion (syncytia formation). Seems to block fusion of virions with infected-cell membranes. The polypeptide is Envelope glycoprotein K (gK) (Human herpesvirus 2 (strain HG52) (HHV-2)).